Reading from the N-terminus, the 314-residue chain is tRNA dimethylallyltransferase (314 aa).

Residues 1-24 (MAEEPQRSPAPTSPFAFTVPSNPL) form a disordered region. 40 to 47 (GPTASGKS) contributes to the ATP binding site. 42–47 (TASGKS) is a substrate binding site.

Belongs to the IPP transferase family. In terms of assembly, monomer. Requires Mg(2+) as cofactor.

It carries out the reaction adenosine(37) in tRNA + dimethylallyl diphosphate = N(6)-dimethylallyladenosine(37) in tRNA + diphosphate. Functionally, catalyzes the transfer of a dimethylallyl group onto the adenine at position 37 in tRNAs that read codons beginning with uridine, leading to the formation of N6-(dimethylallyl)adenosine (i(6)A). This chain is tRNA dimethylallyltransferase, found in Cereibacter sphaeroides (strain ATCC 17029 / ATH 2.4.9) (Rhodobacter sphaeroides).